Reading from the N-terminus, the 425-residue chain is Enolase (425 aa).

Position 162 (Gln162) interacts with (2R)-2-phosphoglycerate. The active-site Proton donor is Glu204. Residues Asp241, Glu284, and Asp311 each coordinate Mg(2+). (2R)-2-phosphoglycerate is bound by residues Lys336, Arg365, Ser366, and Lys387. Lys336 acts as the Proton acceptor in catalysis.

The protein belongs to the enolase family. It depends on Mg(2+) as a cofactor.

It is found in the cytoplasm. Its subcellular location is the secreted. It localises to the cell surface. The catalysed reaction is (2R)-2-phosphoglycerate = phosphoenolpyruvate + H2O. It functions in the pathway carbohydrate degradation; glycolysis; pyruvate from D-glyceraldehyde 3-phosphate: step 4/5. In terms of biological role, catalyzes the reversible conversion of 2-phosphoglycerate (2-PG) into phosphoenolpyruvate (PEP). It is essential for the degradation of carbohydrates via glycolysis. This Brucella anthropi (strain ATCC 49188 / DSM 6882 / CCUG 24695 / JCM 21032 / LMG 3331 / NBRC 15819 / NCTC 12168 / Alc 37) (Ochrobactrum anthropi) protein is Enolase.